The following is a 346-amino-acid chain: Cell division protein ZipA (346 aa).

At 1-6 (MEDLQL) the chain is on the periplasmic side. The helical transmembrane segment at 7–27 (VLFVLGAIAIVAVLVHGFWSI) threads the bilayer. Over 28–346 (RRQQPKSLKD…DYLHRIRANA (319 aa)) the chain is Cytoplasmic. The disordered stretch occupies residues 116–146 (EPSMAQPDFSLQSPTAKEQHRGPKASRQEPV).

It belongs to the ZipA family. As to quaternary structure, interacts with FtsZ via their C-terminal domains.

The protein localises to the cell inner membrane. Essential cell division protein that stabilizes the FtsZ protofilaments by cross-linking them and that serves as a cytoplasmic membrane anchor for the Z ring. Also required for the recruitment to the septal ring of downstream cell division proteins. This Shewanella sp. (strain ANA-3) protein is Cell division protein ZipA.